Here is a 92-residue protein sequence, read N- to C-terminus: Small ribosomal subunit protein uS19 (92 aa).

The protein belongs to the universal ribosomal protein uS19 family.

Functionally, protein S19 forms a complex with S13 that binds strongly to the 16S ribosomal RNA. The protein is Small ribosomal subunit protein uS19 of Cyanothece sp. (strain PCC 7425 / ATCC 29141).